Consider the following 439-residue polypeptide: ATP-dependent protease ATPase subunit HslU (439 aa).

ATP is bound by residues Ile17, 59-64 (GVGKTE), Asp251, Glu317, and Arg389.

The protein belongs to the ClpX chaperone family. HslU subfamily. As to quaternary structure, a double ring-shaped homohexamer of HslV is capped on each side by a ring-shaped HslU homohexamer. The assembly of the HslU/HslV complex is dependent on binding of ATP.

It localises to the cytoplasm. In terms of biological role, ATPase subunit of a proteasome-like degradation complex; this subunit has chaperone activity. The binding of ATP and its subsequent hydrolysis by HslU are essential for unfolding of protein substrates subsequently hydrolyzed by HslV. HslU recognizes the N-terminal part of its protein substrates and unfolds these before they are guided to HslV for hydrolysis. This chain is ATP-dependent protease ATPase subunit HslU, found in Campylobacter jejuni subsp. jejuni serotype O:6 (strain 81116 / NCTC 11828).